We begin with the raw amino-acid sequence, 533 residues long: uncharacterized protein (533 aa).

4 helical membrane passes run 1-21, 135-155, 193-213, and 472-492; these read MLAF…VAFI, LPRF…IAAL, AIAA…AILA, and LLVN…PLVG.

The protein resides in the cell membrane. This is an uncharacterized protein from Mycobacterium bovis (strain ATCC BAA-935 / AF2122/97).